Here is a 796-residue protein sequence, read N- to C-terminus: DnaJ homolog subfamily C member 10 (796 aa).

The first 33 residues, 1–33 (MKHSLNTATSSSSVLKRTILYLVLISLAALVYC), serve as a signal peptide directing secretion. The 65-residue stretch at 36–100 (DYYDLLGVSK…DLRKKYDKYG (65 aa)) folds into the J domain. The Thioredoxin 1 domain maps to 131 to 233 (EIITLDRGEF…ERLVNFAMPY (103 aa)). Residues Cys-159 and Cys-162 are joined by a disulfide bond. Trxb stretches follow at residues 236–351 (STVT…LPDL) and 349–464 (PDLE…PTNF). Thioredoxin domains lie at 455 to 554 (HVIT…IEDL), 558 to 668 (SVVT…ALMY), and 672 to 780 (ASFD…ITKR). Cysteines 481 and 484 form a disulfide. N-linked (GlcNAc...) asparagine glycosylation occurs at Asn-531. 2 cysteine pairs are disulfide-bonded: Cys-589-Cys-592 and Cys-701-Cys-704. The N-linked (GlcNAc...) asparagine glycan is linked to Asn-753. Positions 793–796 (KDEL) match the Prevents secretion from ER motif.

Its subcellular location is the endoplasmic reticulum lumen. In terms of biological role, endoplasmic reticulum disulfide reductase involved both in the correct folding of proteins and degradation of misfolded proteins. Required for efficient folding of proteins in the endoplasmic reticulum by catalyzing the removal of non-native disulfide bonds formed during the folding of proteins. Also involved in endoplasmic reticulum-associated degradation (ERAD) by reducing incorrect disulfide bonds in misfolded glycoproteins. The protein is DnaJ homolog subfamily C member 10 (dnajc10) of Xenopus laevis (African clawed frog).